The following is a 762-amino-acid chain: 5-methyltetrahydropteroyltriglutamate--homocysteine methyltransferase (762 aa).

5-methyltetrahydropteroyltri-L-glutamate contacts are provided by residues 17 to 20 and lysine 111; that span reads REWK. L-homocysteine-binding positions include 435 to 437 and glutamate 488; that span reads IGS. Residues 435-437 and glutamate 488 each bind L-methionine; that span reads IGS. Residues 519 to 520 and tryptophan 565 contribute to the 5-methyltetrahydropteroyltri-L-glutamate site; that span reads RC. Aspartate 603 provides a ligand contact to L-homocysteine. Residue aspartate 603 coordinates L-methionine. Glutamate 609 is a binding site for 5-methyltetrahydropteroyltri-L-glutamate. 3 residues coordinate Zn(2+): histidine 645, cysteine 647, and glutamate 669. The active-site Proton donor is histidine 698. Zn(2+) is bound at residue cysteine 730.

The protein belongs to the vitamin-B12 independent methionine synthase family. The cofactor is Zn(2+).

It carries out the reaction 5-methyltetrahydropteroyltri-L-glutamate + L-homocysteine = tetrahydropteroyltri-L-glutamate + L-methionine. It functions in the pathway amino-acid biosynthesis; L-methionine biosynthesis via de novo pathway; L-methionine from L-homocysteine (MetE route): step 1/1. Its function is as follows. Catalyzes the transfer of a methyl group from 5-methyltetrahydrofolate to homocysteine resulting in methionine formation. The protein is 5-methyltetrahydropteroyltriglutamate--homocysteine methyltransferase of Bacillus cereus (strain ATCC 14579 / DSM 31 / CCUG 7414 / JCM 2152 / NBRC 15305 / NCIMB 9373 / NCTC 2599 / NRRL B-3711).